Consider the following 1035-residue polypeptide: Kinesin-like protein KIN-4A (1035 aa).

Positions 11–370 (SVKVAVHIRP…LKYANRARNI (360 aa)) constitute a Kinesin motor domain. 90–97 (GQTGSGKT) contacts ATP. Coiled-coil stretches lie at residues 408-436 (CAEV…HEYR), 504-707 (QNSM…RKSS), and 881-911 (KEIV…IATS). The segment at 704–724 (RKSSPREHSAGTNGFGTNGQT) is disordered.

It belongs to the TRAFAC class myosin-kinesin ATPase superfamily. Kinesin family. KIN-4 subfamily. As to quaternary structure, homodimer. In terms of tissue distribution, expressed in stems and flowers. Detected in cells undergoing secondary wall deposition including developing interfascicular fibers and xylem cells, but also in dividing cells and expanding/elongating parenchyma cells.

It is found in the cytoplasm. The protein localises to the cytoskeleton. In terms of biological role, kinesin-like motor protein involved in the control of the oriented deposition of cellulose microfibrils. Its motor activity is directed toward the microtubule's plus end. It possesses the potential to drive long-distance transport of cargo along cortical microtubules. Regulates cell wall mechanics during cell elongation, by the regulation of primary and secondary walls deposition. Contributes to cortical microtubule-mediated trafficking of cell wall components. This is Kinesin-like protein KIN-4A from Arabidopsis thaliana (Mouse-ear cress).